The following is a 335-amino-acid chain: Abasic site processing protein HMCES (335 aa).

The active-site Nucleophile is the Cys-2. A Thiazolidine linkage to a ring-opened DNA abasic site modification is found at Cys-2. Basic and acidic residues predominate over residues 24–39 (QGGRKWPNWRDGDSDK). The segment at 24 to 51 (QGGRKWPNWRDGDSDKYQPSYNKSPQSN) is disordered. The span at 40 to 51 (YQPSYNKSPQSN) shows a compositional bias: polar residues. Glu-129 is an active-site residue. Positions 284–335 (LQNKSPKKEESHSIQSPKLSQFGAPPKKTSAGLMQQWLKKEDGEPSPKRAKK) are disordered. The segment covering 321 to 335 (LKKEDGEPSPKRAKK) has biased composition (basic and acidic residues).

It belongs to the SOS response-associated peptidase family. In terms of processing, ubiquitination of the hmces DNA-protein cross-link by rfwd3 may promotes its degradation.

The protein localises to the chromosome. With respect to regulation, formation and reversal of DNA-protein cross-link depends on DNA context. Catalyzes formation of the thiazolidine linkage in presence of abasic sites in single-stranded DNA. Mediates the reversal of the thiazolidine cross-link in presence of double stranded DNA. Sensor of abasic sites in single-stranded DNA (ssDNA) required to preserve genome integrity by promoting error-free repair of abasic sites. Acts as an enzyme that recognizes and binds abasic sites in ssDNA at replication forks and chemically modifies the lesion by forming a covalent cross-link with DNA: forms a stable thiazolidine linkage between a ring-opened abasic site and the alpha-amino and sulfhydryl substituents of its N-terminal catalytic cysteine residue. The hmces DNA-protein cross-link is then either reversed or degraded. Hmces is able to catalyze the reversal of its thiazolidine cross-link and cycle between a cross-link and a non-cross-linked state depending on DNA context: mediates self-reversal of the thiazolidine cross-link in double stranded DNA, allowing apex1 to initiate downstream repair of abasic sites. The hmces DNA-protein cross-link can also be degraded by the sprtn metalloprotease following unfolding by the brip1/fancj helicase. Promotes error-free repair of abasic sites by protecting abasic sites from translesion synthesis (TLS) polymerases and endonucleases that are error-prone and would generate mutations and double-strand breaks. Acts as a protease: mediates autocatalytic processing of its N-terminal methionine in order to expose the catalytic cysteine. The hmces DNA-protein cross-link is then either reversed or degraded. According to a model, the HMCES DNA-protein cross-link. The polypeptide is Abasic site processing protein HMCES (Xenopus tropicalis (Western clawed frog)).